Consider the following 536-residue polypeptide: CTP synthase (536 aa).

The segment at 1-268 (MKSKFIFITG…GKVLCKLFNI (268 aa)) is amidoligase domain. Ser-14 is a CTP binding site. Ser-14 lines the UTP pocket. 15 to 20 (SLGKGL) is an ATP binding site. Tyr-55 is a binding site for L-glutamine. Residue Asp-72 coordinates ATP. 2 residues coordinate Mg(2+): Asp-72 and Glu-142. Residues 149–151 (DIE), 189–194 (KTKPMQ), and Lys-225 each bind CTP. Residues 189–194 (KTKPMQ) and Lys-225 each bind UTP. The Glutamine amidotransferase type-1 domain occupies 293–535 (TIALVGKYVE…IKAAVDNKIN (243 aa)). Gly-356 provides a ligand contact to L-glutamine. Residue Cys-383 is the Nucleophile; for glutamine hydrolysis of the active site. Residues 384 to 387 (LGMQ), Glu-407, and Arg-463 contribute to the L-glutamine site. Catalysis depends on residues His-508 and Glu-510.

This sequence belongs to the CTP synthase family. As to quaternary structure, homotetramer.

The enzyme catalyses UTP + L-glutamine + ATP + H2O = CTP + L-glutamate + ADP + phosphate + 2 H(+). It carries out the reaction L-glutamine + H2O = L-glutamate + NH4(+). It catalyses the reaction UTP + NH4(+) + ATP = CTP + ADP + phosphate + 2 H(+). Its pathway is pyrimidine metabolism; CTP biosynthesis via de novo pathway; CTP from UDP: step 2/2. Allosterically activated by GTP, when glutamine is the substrate; GTP has no effect on the reaction when ammonia is the substrate. The allosteric effector GTP functions by stabilizing the protein conformation that binds the tetrahedral intermediate(s) formed during glutamine hydrolysis. Inhibited by the product CTP, via allosteric rather than competitive inhibition. Its function is as follows. Catalyzes the ATP-dependent amination of UTP to CTP with either L-glutamine or ammonia as the source of nitrogen. Regulates intracellular CTP levels through interactions with the four ribonucleotide triphosphates. The protein is CTP synthase of Treponema denticola (strain ATCC 35405 / DSM 14222 / CIP 103919 / JCM 8153 / KCTC 15104).